Here is a 179-residue protein sequence, read N- to C-terminus: Large ribosomal subunit protein uL10 (179 aa).

This sequence belongs to the universal ribosomal protein uL10 family. In terms of assembly, part of the ribosomal stalk of the 50S ribosomal subunit. The N-terminus interacts with L11 and the large rRNA to form the base of the stalk. The C-terminus forms an elongated spine to which L12 dimers bind in a sequential fashion forming a multimeric L10(L12)X complex.

Its function is as follows. Forms part of the ribosomal stalk, playing a central role in the interaction of the ribosome with GTP-bound translation factors. The polypeptide is Large ribosomal subunit protein uL10 (Mycolicibacterium gilvum (strain PYR-GCK) (Mycobacterium gilvum (strain PYR-GCK))).